A 187-amino-acid polypeptide reads, in one-letter code: Structural protein ORF187 (187 aa).

The helical transmembrane segment at 65–85 (IYQPTAIAVSGVGGIIGALLA) threads the bilayer.

The protein resides in the host membrane. It is found in the virion. This Acidianus two-tailed virus (ATV) protein is Structural protein ORF187.